Reading from the N-terminus, the 146-residue chain is Kappa-casein (146 aa).

3 O-linked (GalNAc...) threonine glycosylation sites follow: threonine 107, threonine 112, and threonine 118. Position 143 is a phosphoserine (serine 143).

The protein belongs to the kappa-casein family. In terms of tissue distribution, mammary gland specific. Secreted in milk.

It localises to the secreted. Its function is as follows. Kappa-casein stabilizes micelle formation, preventing casein precipitation in milk. The polypeptide is Kappa-casein (CSN3) (Dicotyles tajacu (Collared peccary)).